Reading from the N-terminus, the 20-residue chain is GMP synthase [glutamine-hydrolyzing] (20 aa).

Residues 1-20 (ALGDQLLSVFVDHTLVDEVA) form the GMPS ATP-PPase domain.

As to quaternary structure, homodimer.

The enzyme catalyses XMP + L-glutamine + ATP + H2O = GMP + L-glutamate + AMP + diphosphate + 2 H(+). Its pathway is purine metabolism; GMP biosynthesis; GMP from XMP (L-Gln route): step 1/1. Catalyzes the synthesis of GMP from XMP. The polypeptide is GMP synthase [glutamine-hydrolyzing] (guaA) (Fructilactobacillus sanfranciscensis (Lactobacillus sanfranciscensis)).